A 150-amino-acid chain; its full sequence is Arginine repressor (150 aa).

The protein belongs to the ArgR family.

It is found in the cytoplasm. The protein operates within amino-acid biosynthesis; L-arginine biosynthesis [regulation]. In terms of biological role, regulates arginine biosynthesis genes. The sequence is that of Arginine repressor from Thermoanaerobacter sp. (strain X514).